The following is a 438-amino-acid chain: Prenyltransferase malE (438 aa).

Glutamate 92 contributes to the substrate binding site. Dimethylallyl diphosphate contacts are provided by arginine 106, lysine 192, tyrosine 194, lysine 259, tyrosine 261, tyrosine 346, and tyrosine 411.

The protein belongs to the tryptophan dimethylallyltransferase family.

It catalyses the reaction (S)-3-(indol-3-ylmethyl)-6,7,8,8a-tetrahydropyrrolo[1,2-a]pyrazin-1-one + dimethylallyl diphosphate = (S)-3-{[2-(1,1-dimethylallyl)-indol-3-yl]methyl}-6,7,8,8a-tetrahydropyrrolo[1,2-a]pyrazin-1-one + diphosphate. It carries out the reaction 1-hydroxy-3-(indol-3-ylmethyl)-6H,7H,8H-5lambda(5)-pyrrolo[1,2-a]pyrazine + dimethylallyl diphosphate = 1-hydroxy-3-{[2-(1,1-dimethylallyl)-indol-3-yl]methyl}-6H,7H,8H-5lambda(5)-pyrrolo[1,2-a]pyrazine + diphosphate. The protein operates within alkaloid biosynthesis. Its function is as follows. Prenyltransferase; part of the gene cluster that mediates the biosynthesis of malbrancheamide, a dichlorinated fungal indole alkaloid that belongs to a family of natural products containing a characteristic bicyclo[2.2.2]diazaoctane core. The first step of malbrancheamide biosynthesis involves coupling of L-proline and L-tryptophan by malG, a bimodular NRPS, to produce L-Pro-L-Trp aldehyde through reductive offloading. This compound undergoes spontaneous cyclization and dehydration to give a dienamine which is reverse prenylated at C-2 by malE. The other prenyltransferase present in the cluster, malB, displays modest activity, suggesting that may be a redundant gene in the pathway. Subsequently, a [4+2] Diels-Alder cyclo-addition catalyzed by the bifunctional enzyme malC forms the characteristic bicyclo[2.2.2]diazaoctane ring of premalbrancheamid. Finally, the flavin-dependent halogenase malA catalyzes the iterative dichlorination of the indole ring of premalbrancheamide to yield C-9 monochlorinated malbrancheamide B, C-8 monochlorinated isomalbrancheamide B, and dichlorinated malbrancheamide. MalA is also able to brominate premalbrancheamide at C-9 to yield malbrancheamide C, and, to a lesser extend, at C-8 to yield isomalbrancheamide C. Finally, malA can brominate C-9 monochlorinated malbrancheamide B at C-8 to yield malbrancheamide D, or C-8 monochlorinated isomalbrancheamide B at C-9 to produce isomalbrancheamide D. The chain is Prenyltransferase malE from Malbranchea aurantiaca.